A 1041-amino-acid polypeptide reads, in one-letter code: MAAAAAAGAASGLPGPVAQGLKEALVDTLTGILSPVQEVRAAAEEQIKVLEVTEEFGVHLAELTVDPQGALAIRQLASVILKQYVETHWCAQSEKFRPPETTERAKIVIRELLPNGLRESISKVRSSVAYAVSAIAHWDWPEAWPQLFNLLMEMLVSGDLNAVHGAMRVLTEFTREVTDTQMPLVAPVILPEMYKIFTMAEVYGIRTRSRAVEIFTTCAHMICNMEELEKGAAKVLIFPVVQQFTEAFVQALQMPDGPTSDSGFKMEVLKAVTALVKNFPKHMVSSMQQILPIVWNTLTESAAFYVRTEVNYTEEVEDPVDSDGEVLGFENLVFSIFEFVHALLENSKFKSTVKKALPELIYYIILYMQITEEQIKVWTANPQQFVEDEDDDTFSYTVRIAAQDLLLAVATDFQNESAVALATAATRHLQEAEQTKASGTEHWWKIHEACMLALGSVKSIITDSVKNGRIHFDMHGFLTNVILADLNLSASPFLLGRALWAASRFTVAMSPELIQQFLQATVSGLHETQPPSVRISAVRAIWGYCDQLKVSESTHVLQPFLPSILDGLIHLAAQFSSEVLNLVMETLCIVCTVDPEFTASVENKICPFTIAIFLKYSNDPVVASLAQDIFKELSQIEACQGPMQMRLIPTLVSIMQAPADKIPAGLCATAIDILTTVVRNTKPPLSQLLICQAFPAVAQCTLHTDDNATMQNGGECLRAYVSVTLEQVAQWHDEQGHNGLWYVMQVVSQLLDPRTSEFTAAFVGRLVSTLISKAGRELGENLDQILRAILSKMQQAETLSVMQSLIMVFAHLVHTQLEPLLEFLCSLPGPTGKPALEFVMAEWTSRQHLFYGQYEGKVSSVALCKLLQHGINADDKRLQDIRVKGEEIYSMDEGIRTRSKSAKNPERWTNIPLLVKILKLIINELSNVMEANAARQATPAEWNQDDSNDMWEDQEEEEEEEEDGLAGQLLSDILATSKYEEDYYEDDEEDDPDALKDPLYQIDLQAYLTDFLCQFAQQPCYIMFSCHLNDNERRVLQTIGI.

An N-acetylalanine modification is found at A2. Positions 43–119 constitute an Importin N-terminal domain; that stretch reads AEEQIKVLEV…RELLPNGLRE (77 aa). Residues 936–967 form a disordered region; sequence QATPAEWNQDDSNDMWEDQEEEEEEEEDGLAG. Positions 943–964 are enriched in acidic residues; that stretch reads NQDDSNDMWEDQEEEEEEEEDG.

This sequence belongs to the importin beta family. As to quaternary structure, interacts with histones H2A, H2B, H3 and H4. The binding is coupled to RanGTP cycles. Interacts with AKIRIN2; promoting association with pre-assembled proteasomes. Associates with pre-assembled proteasomes; interaction is indirect and mediated via interaction with AKIRIN2. Interacts with PPP2R1A and PPP2R1B.

It is found in the cytoplasm. The protein localises to the nucleus. Nuclear transport receptor that mediates nuclear import of proteins, such as histones, proteasome and actin. Serves as receptor for nuclear localization signals (NLS) in cargo substrates. Is thought to mediate docking of the importin/substrate complex to the nuclear pore complex (NPC) through binding to nucleoporin and the complex is subsequently translocated through the pore by an energy requiring, Ran-dependent mechanism. At the nucleoplasmic side of the NPC, Ran binds to the importin, the importin/substrate complex dissociates and importin is re-exported from the nucleus to the cytoplasm where GTP hydrolysis releases Ran. The directionality of nuclear import is thought to be conferred by an asymmetric distribution of the GTP- and GDP-bound forms of Ran between the cytoplasm and nucleus. Mediates the import of pre-assembled proteasomes into the nucleus; AKIRIN2 acts as a molecular bridge between IPO9 and the proteasome complex. Mediates the nuclear import of histones H2A, H2B, H4 and H4. In addition to nuclear import, also acts as a chaperone for histones by preventing inappropriate non-nucleosomal interactions. Mediates the nuclear import of actin. This Mus musculus (Mouse) protein is Importin-9.